The following is a 634-amino-acid chain: Knob-associated histidine-rich protein (634 aa).

A signal peptide spans 1 to 34 (MKSFKNKNTLRRKKAFPVFTKILLVSFLVWVLKC). N-linked (GlcNAc...) asparagine glycosylation occurs at Asn-42. Positions 57-87 (AQKQHEHHHHHHHQHQHQHQAPHQAHHHHHH) are enriched in basic residues. 2 disordered regions span residues 57-143 (AQKQ…QVFR) and 347-634 (SSVN…GCCG). Low complexity predominate over residues 95–104 (PQVHQQVHGQ). The span at 108–117 (HHHHHHHHHQ) shows a compositional bias: basic residues. Basic and acidic residues-rich tracts occupy residues 354 to 375 (KHGDEKHHSSKKHEGNDGEGEK) and 396 to 405 (KDNEDAESVK). Basic residues predominate over residues 406-422 (SKKHKSHDCEKKKSKKH). Basic and acidic residues-rich tracts occupy residues 423–444 (KDNEDAESVKSKKSVKEKGEKH) and 453–493 (KTNE…KKVD). Polar residues predominate over residues 494–505 (STSADNKSTNAA). A compositionally biased stretch (basic and acidic residues) spans 509–520 (AKDKTQGGKTDK). 4 consecutive repeat copies span residues 540-549 (TKGATKEAST), 550-559 (SKEATKEAST), 560-569 (SKGATKEAST), and 570-579 (TEGATKGAST). Residues 540–580 (TKGATKEASTSKEATKEASTSKGATKEASTTEGATKGASTT) form a 4 X 10 AA tandem repeats of [TS]-[KE]-[GE]-A-T-K-[EG]-A-S-T region. Residues 567–591 (ASTTEGATKGASTTAGSTTGATTGA) show a composition bias toward low complexity. Positions 605 to 620 (AANNGEQVMSRGQAQL) are enriched in polar residues. Residues 625 to 634 (KKKKKRGCCG) show a composition bias toward basic residues.

The protein localises to the secreted. KAHRP might mimick human histidine-rich glycoproteins to anchor host thrombospondin or a parasite analog in a binding complex with the endothelial cell receptor. In Plasmodium falciparum (isolate FCR-3 / Gambia), this protein is Knob-associated histidine-rich protein.